Here is a 114-residue protein sequence, read N- to C-terminus: Pole-localizer protein TmaR (114 aa).

Positions 70–111 form a coiled coil; it reads RDDYESRVDDYTIRNAELSKQRREASTKMKEQKKAHAELLKN. Residues 89–114 are disordered; sequence KQRREASTKMKEQKKAHAELLKNAEK.

It belongs to the pole-localizer TmaR family.

Its subcellular location is the cytoplasm. In terms of biological role, pole-localizer protein involved in the regulation of several cellular processes. The protein is Pole-localizer protein TmaR of Haemophilus influenzae (strain 86-028NP).